Here is a 112-residue protein sequence, read N- to C-terminus: uncharacterized protein (112 aa).

This is an uncharacterized protein from Escherichia coli.